The primary structure comprises 630 residues: Putative lipase atg15 (630 aa).

The Cytoplasmic segment spans residues 1 to 20 (MKSSQRRIKRHAMRDMSIST). The chain crosses the membrane as a helical; Signal-anchor for type II membrane protein span at residues 21–40 (LLLSVVLLPSVVSANDHVYF). Over 41–630 (NPPSPGSPFL…WGSDIEHYEI (590 aa)) the chain is Lumenal. Asn200, Asn222, Asn280, and Asn304 each carry an N-linked (GlcNAc...) asparagine glycan. Catalysis depends on Ser320, which acts as the Charge relay system. An N-linked (GlcNAc...) asparagine glycan is attached at Asn466. The segment covering 577–589 (SVTAPPFSTSTSS) has biased composition (polar residues). The disordered stretch occupies residues 577–599 (SVTAPPFSTSTSSDHVRADHSIG).

Belongs to the AB hydrolase superfamily. Lipase family. In terms of assembly, binds to both phosphatidylinositol (PI) and phosphatidylinositol 3,5-bisphosphate (PIP2).

It is found in the endosome. Its subcellular location is the multivesicular body membrane. The protein localises to the prevacuolar compartment membrane. The enzyme catalyses a triacylglycerol + H2O = a diacylglycerol + a fatty acid + H(+). In terms of biological role, lipase which is essential for lysis of subvacuolar cytoplasm to vacuole targeted bodies and intravacuolar autophagic bodies. Involved in the lysis of intravacuolar multivesicular body (MVB) vesicles. The intravacuolar membrane disintegration by atg15 is critical to life span extension. This chain is Putative lipase atg15 (atg15), found in Aspergillus clavatus (strain ATCC 1007 / CBS 513.65 / DSM 816 / NCTC 3887 / NRRL 1 / QM 1276 / 107).